Reading from the N-terminus, the 556-residue chain is MATESNPALASLPSNVREIIELASQRDGGIPFRAKTAHVHRTWAGTFTSLPELYIQPESVSEIQKVVRLARHARRRVTTTGCGHSPSDITCTSSWLVNLDNFNKVISVDHLTGLVVVQAGIRLYQLSDELDRRGLALPSLGSINEQSIAGAISTGTHGSGIKHGLVGESITELKITLANGETLSCSPEDKPDLFRAALISLGALGIITEVTFKAVPAFSLAWSQAIDSDKRIFEKWEKDLWSQAEFVRIWWFPYMRRAAVWTANVVDPVDLKTGAVKHREPPTSYYDSWLGYYVYHNLLALSRWIPRITPWIEWFVFGMQYGFKNGEVTRIGAVQPSQKAFLLNCLYSQSVNEWAIPLHKGPEALQRLGAWLQNLKPGDPGYVEHGIPYSAEGLWVHSPVEVRASDSTVYTSREANTRPFLDPTQSDGPTLYLNAIMYRPYHREPTYNATERYYLGFEWLMRELGGKPHWAKTFTATQADLARWYGDDFQRWGAVRESVDPEGMFVGPWHRRYLLEPLQRDRLLPLEEIQQTTKKVPARQGGGIEVIGIQNLVAPN.

Residues 47–217 (FTSLPELYIQ…TEVTFKAVPA (171 aa)) enclose the FAD-binding PCMH-type domain. His-84 is subject to Pros-8alpha-FAD histidine.

Belongs to the oxygen-dependent FAD-linked oxidoreductase family. It depends on FAD as a cofactor.

The protein resides in the mitochondrion membrane. It catalyses the reaction D-arabinono-1,4-lactone + O2 = dehydro-D-arabinono-1,4-lactone + H2O2 + H(+). It participates in cofactor biosynthesis; D-erythroascorbate biosynthesis; dehydro-D-arabinono-1,4-lactone from D-arabinose: step 2/2. This chain is Putative D-arabinono-1,4-lactone oxidase (alo-1), found in Neurospora crassa (strain ATCC 24698 / 74-OR23-1A / CBS 708.71 / DSM 1257 / FGSC 987).